We begin with the raw amino-acid sequence, 229 residues long: MQTTAKSSTPSITAVVAATAENGIGLNGGLPWRLPGEMKYFARVTTGETPSSDPSEQNVVIMGRKTWESIPSRFRPLKNRRNVVISGKGVDLGTAENSTVYTDIPSALSALRSTTESGHSPRIFLIGGATLYTSSLLPSSVPSLNSSTSTSPLPFSRPLIDRILLTRILSPFECDAYLEDFAAHTKPDGSKVWKKASIKEFREWIGWDIEEQVEEKGVKYIFEMWVLNQ.

In terms of domain architecture, DHFR spans 11–227 (SITAVVAATA…VKYIFEMWVL (217 aa)). NADP(+) contacts are provided by residues Ala-17 and 23–29 (GIGLNGG). 37–42 (EMKYFA) contributes to the substrate binding site. Residue 64–66 (RKT) coordinates NADP(+). Position 80 (Arg-80) interacts with substrate. NADP(+) contacts are provided by residues 86–88 (SGK) and 127–134 (GGATLYTS).

Belongs to the dihydrofolate reductase family. As to quaternary structure, monomer.

The enzyme catalyses (6S)-5,6,7,8-tetrahydrofolate + NADP(+) = 7,8-dihydrofolate + NADPH + H(+). It participates in cofactor biosynthesis; tetrahydrofolate biosynthesis; 5,6,7,8-tetrahydrofolate from 7,8-dihydrofolate: step 1/1. In terms of biological role, key enzyme in folate metabolism. Catalyzes an essential reaction for de novo glycine and purine synthesis, and for DNA precursor synthesis. In Cryptococcus neoformans var. neoformans serotype D (strain JEC21 / ATCC MYA-565) (Filobasidiella neoformans), this protein is Dihydrofolate reductase (DFR1).